A 469-amino-acid chain; its full sequence is COP9 signalosome complex subunit 5 (469 aa).

The 138-residue stretch at 63-200 (TYISSLALCK…IGAFRTFPDN (138 aa)) folds into the MPN domain. Residues His146, His148, and Asp159 each contribute to the Zn(2+) site. The JAMM motif motif lies at 146–159 (HSHPGYGCWLSGID). Disordered regions lie at residues 201–220 (YKSP…PPSK) and 331–404 (YDSF…KRPM). Residues 344–353 (DEMDDESDLD) show a composition bias toward acidic residues.

Belongs to the peptidase M67A family. CSN5 subfamily. Component of the COP9 signalosome (CSN) complex.

The protein localises to the cytoplasm. It is found in the nucleus. Its function is as follows. Catalytic Component of the COP9 signalosome (CSN) complex that acts as an regulator of the ubiquitin (Ubl) conjugation pathway by mediating the deneddylation of the cullin subunit of SCF-type E3 ubiquitin-protein ligase complexes. The CSN complex is involved in the regulation of the mating pheromone response. The protein is COP9 signalosome complex subunit 5 (RRI1) of Debaryomyces hansenii (strain ATCC 36239 / CBS 767 / BCRC 21394 / JCM 1990 / NBRC 0083 / IGC 2968) (Yeast).